We begin with the raw amino-acid sequence, 992 residues long: MGPPSSSGFYVSRAVALLLAALAAALLLALAVLAALYGRCARVQPSDLHHGGVPDAASSPRGTQEEQLPTWPPRPTREPAGTATPGHWRPPGPWDQLRLPPWLVPLHYELELWPRLRPNEFQSPTLSFTGRVNITVRCTAATARLLLHSLFLDCESAEVRGPLSSGPRDGAVGRVPVDDVWFAFDMQYMVLELGATLQPGSRYELQLSFSGLVYRDLREGLFFSIYTDQGERRALLASQMEPTFARSVFPCFDEPALKATFNITIIHHPSYGALSNMPKLGQSEKRDVNGSVWTITTFSTTPHMPTYLVALAICDYDHVSRTERGQEIRIWARKDAIANGNAAFALNITGPIFSFLEDLFNISYPLPKTDIIALPTFDNSAMENWGLLIFDESLLLMQPNDQVTDKKAVISFILSHEIGHQWFGNLVTMNWWNDIWLKEGFASYFEFGVINYFNPKFRRNEVFFSNILHHVLSEDHALVSRAVSLKVENFTETSEINELFDLFTYNKGASLARMLSSFLNENVFISALKSYLKTFSYSTAEQDDLWRHFQMVVDDQSKILLPAPVKSIMDRWTHQSGFPVITLNVSTGAMKQEPFYLGKVKNQTLLTHNDTWIVPILWIKNGITQSLVWLDKSSKIFPEMQVSDSDHDWVILNLNMTGYYRVNYDKVGWKKLKQQLEKDPKAIPVIHRLQMIDDAFSLSKNNYVEIETALDLTKYLAEEDEIIVWYAVLVNLVTKDLVFDVNNYDMYPLLKKYLLKRLISIWNMYSTVIRENVAALQDDYLALVALEKLFETACWLGLEDCLQLSRELFKNWTNHPENEIPYPIKSVVLCYGVAFGSDEEWDFLLNMYSNKTKEEERIQLTYAMSCSKDPWILHRYLEYAVTAAPFTFNETNIMEVVAESEVGRYIVKDFLINNWQAVSERYGTQSLVNLMYIIGRTISTDLQITELQQFFSNMLEEHQKLTVRAKLQTIKNKNLGNKKLNARMTAWLRKNT.

Topologically, residues 2–13 (GPPSSSGFYVSR) are cytoplasmic. Residues 14–34 (AVALLLAALAAALLLALAVLA) form a helical; Signal-anchor for type II membrane protein membrane-spanning segment. At 35–992 (ALYGRCARVQ…RMTAWLRKNT (958 aa)) the chain is on the extracellular side. Residues 48 to 92 (LHHGGVPDAASSPRGTQEEQLPTWPPRPTREPAGTATPGHWRPPG) are disordered. Residue N133 is glycosylated (N-linked (GlcNAc...) asparagine). Residue E241 participates in substrate binding. N-linked (GlcNAc...) asparagine glycans are attached at residues N262, N289, N347, and N361. Residue 380-384 (SAMEN) participates in substrate binding. A Zn(2+)-binding site is contributed by H416. E417 serves as the catalytic Proton acceptor. Residues H420 and E439 each contribute to the Zn(2+) site. N489 carries N-linked (GlcNAc...) asparagine glycosylation. Y505 acts as the Proton donor in catalysis. N-linked (GlcNAc...) asparagine glycosylation is found at N584, N602, N609, N655, N811, N850, and N889.

It belongs to the peptidase M1 family. The cofactor is Zn(2+). As to expression, expressed in skin. Expression levels do not differ between dark and light skin areas.

The protein resides in the membrane. Its function is as follows. Metalloprotease which may be important for placentation by regulating biological activity of key peptides at the embryo-maternal interface. Involved in coat pigmentation patterns. During skin development, may be required to establish the periodicity of tabby markings, initiating a pre-pattern at or before hair follicle development. The sequence is that of Aminopeptidase Q (LVRN) from Acinonyx jubatus (Cheetah).